Reading from the N-terminus, the 272-residue chain is Shikimate dehydrogenase (NADP(+)) (272 aa).

Shikimate contacts are provided by residues 14-16 (SKS) and T61. K65 serves as the catalytic Proton acceptor. E77 contacts NADP(+). Positions 86 and 102 each coordinate shikimate. Residues 126 to 130 (GAGGA), 149 to 154 (NRTVSR), and M213 each bind NADP(+). Y215 provides a ligand contact to shikimate. Position 237 (G237) interacts with NADP(+).

It belongs to the shikimate dehydrogenase family. In terms of assembly, homodimer.

The enzyme catalyses shikimate + NADP(+) = 3-dehydroshikimate + NADPH + H(+). The protein operates within metabolic intermediate biosynthesis; chorismate biosynthesis; chorismate from D-erythrose 4-phosphate and phosphoenolpyruvate: step 4/7. Its function is as follows. Involved in the biosynthesis of the chorismate, which leads to the biosynthesis of aromatic amino acids. Catalyzes the reversible NADPH linked reduction of 3-dehydroshikimate (DHSA) to yield shikimate (SA). The protein is Shikimate dehydrogenase (NADP(+)) of Escherichia coli (strain K12 / MC4100 / BW2952).